The chain runs to 505 residues: ATP synthase subunit alpha (505 aa).

169 to 176 (GDRQIGKT) contributes to the ATP binding site.

This sequence belongs to the ATPase alpha/beta chains family. In terms of assembly, F-type ATPases have 2 components, CF(1) - the catalytic core - and CF(0) - the membrane proton channel. CF(1) has five subunits: alpha(3), beta(3), gamma(1), delta(1), epsilon(1). CF(0) has three main subunits: a(1), b(2) and c(9-12). The alpha and beta chains form an alternating ring which encloses part of the gamma chain. CF(1) is attached to CF(0) by a central stalk formed by the gamma and epsilon chains, while a peripheral stalk is formed by the delta and b chains.

Its subcellular location is the cell inner membrane. It catalyses the reaction ATP + H2O + 4 H(+)(in) = ADP + phosphate + 5 H(+)(out). Functionally, produces ATP from ADP in the presence of a proton gradient across the membrane. The alpha chain is a regulatory subunit. The polypeptide is ATP synthase subunit alpha (Desulfatibacillum aliphaticivorans).